The primary structure comprises 301 residues: Probable aspartoacylase (301 aa).

Histidine 13 and glutamate 16 together coordinate Zn(2+). Residues arginine 54 and 61–62 contribute to the substrate site; that span reads NR. Histidine 105 lines the Zn(2+) pocket. The substrate site is built by glutamate 163 and tyrosine 273.

It belongs to the AspA/AstE family. Aspartoacylase subfamily. It depends on Zn(2+) as a cofactor.

It catalyses the reaction an N-acyl-L-aspartate + H2O = a carboxylate + L-aspartate. The protein is Probable aspartoacylase of Prochlorococcus marinus (strain MIT 9215).